The chain runs to 219 residues: MKMRDTFLKPMHPEGRKFVGIFAAITVILFLIWSVLGWIGVGLTVWCYYFFRDPERVTPAREGLIVSPADGIVSMIEKSVPPAELGMPDQALTRISVFMSVFNCHVNRAPIAGRIAAIAYRPGKFFNASLDKASADNERNSLCIEMADGRQIAVVQIAGLVARRIVCFSSTGDTLRTGERFGLIRFGSRLDVYLPEGVEPMVDLGQTMIAGETVLADLQ.

Ser-188 functions as the Schiff-base intermediate with substrate; via pyruvic acid in the catalytic mechanism. The residue at position 188 (Ser-188) is a Pyruvic acid (Ser); by autocatalysis.

This sequence belongs to the phosphatidylserine decarboxylase family. PSD-A subfamily. In terms of assembly, heterodimer of a large membrane-associated beta subunit and a small pyruvoyl-containing alpha subunit. The cofactor is pyruvate. Post-translationally, is synthesized initially as an inactive proenzyme. Formation of the active enzyme involves a self-maturation process in which the active site pyruvoyl group is generated from an internal serine residue via an autocatalytic post-translational modification. Two non-identical subunits are generated from the proenzyme in this reaction, and the pyruvate is formed at the N-terminus of the alpha chain, which is derived from the carboxyl end of the proenzyme. The post-translation cleavage follows an unusual pathway, termed non-hydrolytic serinolysis, in which the side chain hydroxyl group of the serine supplies its oxygen atom to form the C-terminus of the beta chain, while the remainder of the serine residue undergoes an oxidative deamination to produce ammonia and the pyruvoyl prosthetic group on the alpha chain.

Its subcellular location is the cell membrane. The catalysed reaction is a 1,2-diacyl-sn-glycero-3-phospho-L-serine + H(+) = a 1,2-diacyl-sn-glycero-3-phosphoethanolamine + CO2. Its pathway is phospholipid metabolism; phosphatidylethanolamine biosynthesis; phosphatidylethanolamine from CDP-diacylglycerol: step 2/2. In terms of biological role, catalyzes the formation of phosphatidylethanolamine (PtdEtn) from phosphatidylserine (PtdSer). The sequence is that of Phosphatidylserine decarboxylase proenzyme from Ruegeria pomeroyi (strain ATCC 700808 / DSM 15171 / DSS-3) (Silicibacter pomeroyi).